A 245-amino-acid chain; its full sequence is Zinc finger protein 575 (245 aa).

Positions 1 to 67 (MLERGAESAA…PPQRPHRCPD (67 aa)) are disordered. Over residues 36–49 (PSQSAPGPTASAGS) the composition is skewed to low complexity. Residues 52–63 (RPRRRPPPQRPH) show a composition bias toward basic residues. 6 C2H2-type zinc fingers span residues 63-85 (HRCPDCDKAFSYPSKLATHRLAH), 91-113 (HPCPDCPKAFSYPSKLAAHRLTH), 119-141 (HPCPHCPKSFGHRSKLAAHLWTH), 147-169 (YPCPDCPKSFCYPSKLAAHRHTH), 177-199 (YPCPHCPKAFSFPSKLAAHRLCH), and 213-240 (HRCSSCGQAFGQRRLLLLHQRSHHQVEH).

This sequence belongs to the krueppel C2H2-type zinc-finger protein family.

The protein resides in the nucleus. Functionally, may be involved in transcriptional regulation. The sequence is that of Zinc finger protein 575 (ZNF575) from Homo sapiens (Human).